Here is a 94-residue protein sequence, read N- to C-terminus: Large ribosomal subunit protein bL25 (94 aa).

Belongs to the bacterial ribosomal protein bL25 family. In terms of assembly, part of the 50S ribosomal subunit; part of the 5S rRNA/L5/L18/L25 subcomplex. Contacts the 5S rRNA. Binds to the 5S rRNA independently of L5 and L18.

This is one of the proteins that binds to the 5S RNA in the ribosome where it forms part of the central protuberance. The sequence is that of Large ribosomal subunit protein bL25 from Salmonella arizonae (strain ATCC BAA-731 / CDC346-86 / RSK2980).